Here is a 348-residue protein sequence, read N- to C-terminus: Putative zinc metalloprotease HP_0258 (348 aa).

His-16 provides a ligand contact to Zn(2+). Glu-17 is a catalytic residue. Residue His-20 coordinates Zn(2+). A run of 5 helical transmembrane segments spans residues 43-63 (CFFKLFGTQFALSLIPLGGYV), 93-113 (WILFGGAFFNFLFAILVYFFL), 247-267 (LIMGSSSVKELSGVVGIVGAL), 275-295 (MLLLFGAFLSINLGILNLLPI), and 324-344 (LWLAGVGFLVFIMFLGLFNDL). One can recognise a PDZ domain in the interval 106–175 (AILVYFFLAL…GELVLEIERN (70 aa)).

The protein belongs to the peptidase M50B family. It depends on Zn(2+) as a cofactor.

It is found in the cell inner membrane. This Helicobacter pylori (strain ATCC 700392 / 26695) (Campylobacter pylori) protein is Putative zinc metalloprotease HP_0258.